The following is a 179-amino-acid chain: Large ribosomal subunit protein bL9 (179 aa).

This sequence belongs to the bacterial ribosomal protein bL9 family.

Functionally, binds to the 23S rRNA. The polypeptide is Large ribosomal subunit protein bL9 (Bartonella bacilliformis (strain ATCC 35685 / KC583 / Herrer 020/F12,63)).